We begin with the raw amino-acid sequence, 346 residues long: Cell division protein ZipA (346 aa).

The Periplasmic segment spans residues 1–6 (MEDLQL). Residues 7–27 (VLFVLGAIAIVAVLVHGFWSI) traverse the membrane as a helical segment. At 28-346 (RRQQPKSLKD…DYLHRIRANA (319 aa)) the chain is on the cytoplasmic side. The interval 116-146 (EPSMAQPDFSLQSPTAKEQHRGPKASRQEPV) is disordered.

The protein belongs to the ZipA family. In terms of assembly, interacts with FtsZ via their C-terminal domains.

It localises to the cell inner membrane. In terms of biological role, essential cell division protein that stabilizes the FtsZ protofilaments by cross-linking them and that serves as a cytoplasmic membrane anchor for the Z ring. Also required for the recruitment to the septal ring of downstream cell division proteins. This chain is Cell division protein ZipA, found in Shewanella sp. (strain ANA-3).